Here is a 436-residue protein sequence, read N- to C-terminus: Serine hydroxymethyltransferase (436 aa).

Residues L133 and 137 to 139 (GHL) contribute to the (6S)-5,6,7,8-tetrahydrofolate site. Residue K242 is modified to N6-(pyridoxal phosphate)lysine. Position 366–368 (366–368 (SPF)) interacts with (6S)-5,6,7,8-tetrahydrofolate.

It belongs to the SHMT family. In terms of assembly, homodimer. Pyridoxal 5'-phosphate serves as cofactor.

Its subcellular location is the cytoplasm. The enzyme catalyses (6R)-5,10-methylene-5,6,7,8-tetrahydrofolate + glycine + H2O = (6S)-5,6,7,8-tetrahydrofolate + L-serine. The protein operates within one-carbon metabolism; tetrahydrofolate interconversion. It functions in the pathway amino-acid biosynthesis; glycine biosynthesis; glycine from L-serine: step 1/1. In terms of biological role, catalyzes the reversible interconversion of serine and glycine with tetrahydrofolate (THF) serving as the one-carbon carrier. This reaction serves as the major source of one-carbon groups required for the biosynthesis of purines, thymidylate, methionine, and other important biomolecules. Also exhibits THF-independent aldolase activity toward beta-hydroxyamino acids, producing glycine and aldehydes, via a retro-aldol mechanism. The sequence is that of Serine hydroxymethyltransferase from Novosphingobium aromaticivorans (strain ATCC 700278 / DSM 12444 / CCUG 56034 / CIP 105152 / NBRC 16084 / F199).